The primary structure comprises 446 residues: tRNA-2-methylthio-N(6)-dimethylallyladenosine synthase (446 aa).

Residues Lys3 to Lys119 form the MTTase N-terminal domain. 6 residues coordinate [4Fe-4S] cluster: Cys12, Cys48, Cys82, Cys158, Cys162, and Cys165. One can recognise a Radical SAM core domain in the interval Lys144–Lys374. Positions Lys377–Glu439 constitute a TRAM domain.

This sequence belongs to the methylthiotransferase family. MiaB subfamily. In terms of assembly, monomer. It depends on [4Fe-4S] cluster as a cofactor.

It localises to the cytoplasm. The catalysed reaction is N(6)-dimethylallyladenosine(37) in tRNA + (sulfur carrier)-SH + AH2 + 2 S-adenosyl-L-methionine = 2-methylsulfanyl-N(6)-dimethylallyladenosine(37) in tRNA + (sulfur carrier)-H + 5'-deoxyadenosine + L-methionine + A + S-adenosyl-L-homocysteine + 2 H(+). Functionally, catalyzes the methylthiolation of N6-(dimethylallyl)adenosine (i(6)A), leading to the formation of 2-methylthio-N6-(dimethylallyl)adenosine (ms(2)i(6)A) at position 37 in tRNAs that read codons beginning with uridine. This Pelagibacter ubique (strain HTCC1062) protein is tRNA-2-methylthio-N(6)-dimethylallyladenosine synthase.